A 432-amino-acid chain; its full sequence is Enolase (432 aa).

Q167 lines the (2R)-2-phosphoglycerate pocket. E209 serves as the catalytic Proton donor. D246, E291, and D318 together coordinate Mg(2+). (2R)-2-phosphoglycerate contacts are provided by K343, R372, S373, and K394. K343 (proton acceptor) is an active-site residue.

It belongs to the enolase family. Component of the RNA degradosome, a multiprotein complex involved in RNA processing and mRNA degradation. The cofactor is Mg(2+).

The protein resides in the cytoplasm. The protein localises to the secreted. Its subcellular location is the cell surface. It catalyses the reaction (2R)-2-phosphoglycerate = phosphoenolpyruvate + H2O. Its pathway is carbohydrate degradation; glycolysis; pyruvate from D-glyceraldehyde 3-phosphate: step 4/5. Its function is as follows. Catalyzes the reversible conversion of 2-phosphoglycerate (2-PG) into phosphoenolpyruvate (PEP). It is essential for the degradation of carbohydrates via glycolysis. The polypeptide is Enolase (Pseudoalteromonas translucida (strain TAC 125)).